The primary structure comprises 1116 residues: MQDSGFKKKDRSTNIPQEQFVYTRGGEHKVMKKVVNSVLASALAITVAPMAFAAEDTTTAPKMDAAMEKTVKRLEALGLVAGYGNGDFGADKTITRAEFATLIVRARGLEQGAKLAQFNTTYTDVRSTDWFAGFVNVASGEEIVKGFPDKSFKPQNQVTYAEAVTMIVRALGYEPSVRGVWPNSMISKGSELNIAKGINNPNMQQFAATIFKMLDNALRVKLMEQIEYGTDIRLNVTDETLLTKYLKVTVRDMDWAHEKGNNSDELPLVTNVPAIGLGSLKANEVTLNGKDADLGSNTTYKVAEGINPNAFDGQKVQVWIKDDRENVIVWMEGSEDEDVVMDRVSALYLKGKAFTDDIVKDLSKSDLDDVKIEMDGSEKSYRLTEDTKITYNFTRFNDPVDALSKIYKDNDTFGVKVVLNDNNEVAYLHIIDDQTIDKSVKGVKYGSKVISKIDADKKKITNLDNSKFSDLEDQDEGKDFLVFLDGQPAKLGDLKESDVYSVYYADGDKDKYLVFANRNVAEGKVEKVVSRNKTDIRLTVGGKTYKVYPDASYSENANKDVKKVNSDLDLISNLDGEEVKLLLDPSGRVRHIETKDAIDDRKPLAIITKGATYNSSKDTYDFTVMTQKGKTQIVSLDQKDIYDRYGVNYDKSNDKRQAFEKDLVELLQPKVVKEDSATDANQTVLLEVNFDSKGEVDKVKVLDSKLKYSEKSTWDKLADEDDDVVGDYEVTDKTAVFKMTGDLTPATGTKRGELKNAGTAKFKDVAKKSDLKVWYSVDEDKGEVQAIFVVDGSGLGGDHQFGMVKQYGTASKQDTITIVTKDGDSVTEKEYKLDGDADDLKVDQDIRRGDVISFTLNSDGEVIVDDVVEVVNNNHIDNTASKSATLMPEDERQKAGIDKLVVARVDEVDGNTISLNYADGKTQKYYTKASTAFIDVYDGLEGIDGVDEGDYIVMIDSADIDGTRFDYVLVVSSDDEIRTQHISTKAVTDFLNKPTRLCTKSWRWGRSSHGTKVNTVNDEAVVDGIVTLPADASVRNFNIAFDQEINSKDATVTVTNEDTLGNVTVSEVATDAKVLSFKTAKLDTTKTYIITVKGLKDKNGKAVKDVTLYVEFVAGV.

The signal sequence occupies residues 1-53 (MQDSGFKKKDRSTNIPQEQFVYTRGGEHKVMKKVVNSVLASALAITVAPMAFA). SLH domains lie at 54–117 (AEDT…KLAQ), 118–181 (FNTT…RGVW), and 182–231 (PNSM…YGTD).

Its subcellular location is the secreted. The protein localises to the cell wall. The protein resides in the S-layer. The protein is Surface layer protein of Brevibacillus choshinensis.